The sequence spans 180 residues: NADH-quinone oxidoreductase subunit I (180 aa).

2 consecutive 4Fe-4S ferredoxin-type domains span residues 50–80 and 90–119; these read LTRDPDGEERCVACNLCAVACPVGCISLQKA and EFFRVNFSRCIFCGFCEEACPTTAIQLTPD. 8 residues coordinate [4Fe-4S] cluster: cysteine 60, cysteine 63, cysteine 66, cysteine 70, cysteine 99, cysteine 102, cysteine 105, and cysteine 109.

Belongs to the complex I 23 kDa subunit family. NDH-1 is composed of 13 different subunits. Subunits NuoA, H, J, K, L, M, N constitute the membrane sector of the complex. The cofactor is [4Fe-4S] cluster.

The protein resides in the cell inner membrane. The enzyme catalyses a quinone + NADH + 5 H(+)(in) = a quinol + NAD(+) + 4 H(+)(out). Functionally, NDH-1 shuttles electrons from NADH, via FMN and iron-sulfur (Fe-S) centers, to quinones in the respiratory chain. The immediate electron acceptor for the enzyme in this species is believed to be ubiquinone. Couples the redox reaction to proton translocation (for every two electrons transferred, four hydrogen ions are translocated across the cytoplasmic membrane), and thus conserves the redox energy in a proton gradient. The polypeptide is NADH-quinone oxidoreductase subunit I (Pectobacterium atrosepticum (strain SCRI 1043 / ATCC BAA-672) (Erwinia carotovora subsp. atroseptica)).